The chain runs to 206 residues: Large ribosomal subunit protein uL4 (206 aa).

Belongs to the universal ribosomal protein uL4 family. As to quaternary structure, part of the 50S ribosomal subunit.

One of the primary rRNA binding proteins, this protein initially binds near the 5'-end of the 23S rRNA. It is important during the early stages of 50S assembly. It makes multiple contacts with different domains of the 23S rRNA in the assembled 50S subunit and ribosome. In terms of biological role, forms part of the polypeptide exit tunnel. This is Large ribosomal subunit protein uL4 from Bradyrhizobium diazoefficiens (strain JCM 10833 / BCRC 13528 / IAM 13628 / NBRC 14792 / USDA 110).